Reading from the N-terminus, the 865-residue chain is Eukaryotic translation initiation factor 3 subunit C (865 aa).

Disordered regions lie at residues 1–92 and 206–243; these read MSRF…AKDK and EDEEEPAPKPKKAAKVSFDEATAEDEEDDEGFARVGKG. 2 stretches are compositionally biased toward acidic residues: residues 16 to 54 and 69 to 80; these read SSDEEELYSEEEEEELEDEGDDSDNDGSGDDDSDSDSDA and DDDSSDEEDSDA. Residues 82–92 are compositionally biased toward basic and acidic residues; that stretch reads VTTKVKSAKDK. A compositionally biased stretch (acidic residues) spans 226–235; sequence ATAEDEEDDE. The region spanning 606–780 is the PCI domain; the sequence is FHMHINLELL…QTVIFRKGVE (175 aa). Residues 801 to 865 are disordered; that stretch reads SNERTLEQRT…GGALGAAVRA (65 aa). Polar residues predominate over residues 808-817; the sequence is QRTQGTSNAF. The span at 822 to 841 shows a compositional bias: gly residues; it reads GRGGRGGGRGRGGGRGGPRF.

This sequence belongs to the eIF-3 subunit C family. In terms of assembly, component of the eukaryotic translation initiation factor 3 (eIF-3) complex.

The protein resides in the cytoplasm. Functionally, component of the eukaryotic translation initiation factor 3 (eIF-3) complex, which is involved in protein synthesis of a specialized repertoire of mRNAs and, together with other initiation factors, stimulates binding of mRNA and methionyl-tRNAi to the 40S ribosome. The eIF-3 complex specifically targets and initiates translation of a subset of mRNAs involved in cell proliferation. The chain is Eukaryotic translation initiation factor 3 subunit C from Pyricularia oryzae (strain 70-15 / ATCC MYA-4617 / FGSC 8958) (Rice blast fungus).